The chain runs to 230 residues: Small ribosomal subunit protein uS3 (230 aa).

One can recognise a KH type-2 domain in the interval 39–107; the sequence is VRKFLVEKLQ…PAQINIAEIR (69 aa).

It belongs to the universal ribosomal protein uS3 family. Part of the 30S ribosomal subunit. Forms a tight complex with proteins S10 and S14.

Its function is as follows. Binds the lower part of the 30S subunit head. Binds mRNA in the 70S ribosome, positioning it for translation. This is Small ribosomal subunit protein uS3 from Shewanella baltica (strain OS223).